The primary structure comprises 240 residues: uncharacterized protein (240 aa).

3 helical membrane passes run 12–32, 66–86, and 89–109; these read ICIHISVNILFIDIYITILMS, IQVLNALTRLCIYLAIIFVLV, and ISGYAYVPIIFILIIIVIYFF. 2 N-linked (GlcNAc...) asparagine; by host glycosylation sites follow: N129 and N157.

It localises to the membrane. This is an uncharacterized protein from Acanthamoeba polyphaga mimivirus (APMV).